A 131-amino-acid polypeptide reads, in one-letter code: uncharacterized protein (131 aa).

The HTH hxlR-type domain occupies 26–124 (CSVEVAVNEI…WGKMYGSHQE (99 aa)).

This is an uncharacterized protein from Methanothermobacter thermautotrophicus (strain ATCC 29096 / DSM 1053 / JCM 10044 / NBRC 100330 / Delta H) (Methanobacterium thermoautotrophicum).